The following is a 309-amino-acid chain: Homoserine kinase (309 aa).

85–95 (PYGLGLGSSGS) contributes to the ATP binding site.

Belongs to the GHMP kinase family. Homoserine kinase subfamily.

Its subcellular location is the cytoplasm. The enzyme catalyses L-homoserine + ATP = O-phospho-L-homoserine + ADP + H(+). It functions in the pathway amino-acid biosynthesis; L-threonine biosynthesis; L-threonine from L-aspartate: step 4/5. Its function is as follows. Catalyzes the ATP-dependent phosphorylation of L-homoserine to L-homoserine phosphate. In Thermoplasma volcanium (strain ATCC 51530 / DSM 4299 / JCM 9571 / NBRC 15438 / GSS1), this protein is Homoserine kinase.